Consider the following 206-residue polypeptide: Large ribosomal subunit protein uL4 (206 aa).

This sequence belongs to the universal ribosomal protein uL4 family. In terms of assembly, part of the 50S ribosomal subunit.

One of the primary rRNA binding proteins, this protein initially binds near the 5'-end of the 23S rRNA. It is important during the early stages of 50S assembly. It makes multiple contacts with different domains of the 23S rRNA in the assembled 50S subunit and ribosome. In terms of biological role, forms part of the polypeptide exit tunnel. The protein is Large ribosomal subunit protein uL4 of Methylocella silvestris (strain DSM 15510 / CIP 108128 / LMG 27833 / NCIMB 13906 / BL2).